The chain runs to 670 residues: G-protein coupled receptor moody (670 aa).

Residues M1 to A40 lie on the Extracellular side of the membrane. The chain crosses the membrane as a helical span at residues V41–L61. Residues L62 to N69 are Cytoplasmic-facing. Residues V70–L90 form a helical membrane-spanning segment. Topologically, residues P91–L111 are extracellular. An intrachain disulfide couples C109 to C188. Residues I112–I132 form a helical membrane-spanning segment. The Cytoplasmic segment spans residues N133–W152. The helical transmembrane segment at I153–L173 threads the bilayer. The Extracellular portion of the chain corresponds to G174 to T202. Residues L203–F223 traverse the membrane as a helical segment. Over W224 to K313 the chain is Cytoplasmic. Positions L258 to V302 are disordered. Residues S267–S279 are compositionally biased toward low complexity. A helical transmembrane segment spans residues M314–V334. Residues A335 to H345 lie on the Extracellular side of the membrane. Residues I346–M366 form a helical membrane-spanning segment. The Cytoplasmic portion of the chain corresponds to N367 to D670. Disordered stretches follow at residues D461–S490, E562–V622, and T636–D670. The span at P564–P584 shows a compositional bias: pro residues. Low complexity predominate over residues L585–S598. The span at G646–K660 shows a compositional bias: polar residues.

This sequence belongs to the G-protein coupled receptor 1 family. In terms of tissue distribution, isoform A and isoform B are expressed in the head. Isoform B only is expressed in the body. Expressed in embryonic glial cells that are involved in ensheathment and insulation of the nervous system. Both isoforms are expressed in glia that insulate the larval and adult nervous system. Also expressed in the germ cells, the gut, and the heart.

It is found in the cell membrane. Isoform A and isoform B are required in glia to regulate the acute sensitivity to cocaine and to continuously maintain the proper blood-brain barrier (BBB) function. A moody-mediated signaling pathway functions in glia to regulate nervous system insulation and drug-related behaviors. Galphai and Galphao, and the regulator of G protein signaling, loco, are required in the surface glia to achieve effective insulation. The components function by regulating the cortical actin and thereby stabilizing the extended morphology of the surface glia, which in turn is necessary for the formation of septate junctions of sufficient length to achieve proper sealing of the nerve cord. This Drosophila melanogaster (Fruit fly) protein is G-protein coupled receptor moody.